We begin with the raw amino-acid sequence, 699 residues long: Chitinase A1 (699 aa).

The first 41 residues, 1–41, serve as a signal peptide directing secretion; that stretch reads MINLNKHTAFKKTAKFFLGLSLLLSVIVPSFALQPATAEAA. One can recognise a GH18 domain in the interval 44–454; the sequence is YKIVGYYPSW…NKLKADLPTG (411 aa). Chitin-binding positions include 135-136 and 162-165; these read DQ and GGWT. The Proton donor role is filled by Glu-204. Chitin contacts are provided by residues Tyr-205, 277–280, and Trp-433; that span reads MTYD. The interval 449-471 is disordered; sequence ADLPTGGTVPPVDTTAPSVPGNA. Over residues 452-465 the composition is skewed to low complexity; sequence PTGGTVPPVDTTAP. Fibronectin type-III domains follow at residues 467–553 and 562–647; these read VPGN…TAQP and APTN…TAAE.

This sequence belongs to the glycosyl hydrolase 18 family. Chitinase class II subfamily.

The catalysed reaction is Random endo-hydrolysis of N-acetyl-beta-D-glucosaminide (1-&gt;4)-beta-linkages in chitin and chitodextrins.. The polypeptide is Chitinase A1 (chiA1) (Niallia circulans (Bacillus circulans)).